A 695-amino-acid polypeptide reads, in one-letter code: Sodium-dependent phosphate transport protein 2B (695 aa).

A disordered region spans residues 1–44 (MAPWPELENAHPNPNKFIEGASGPQSSIPDKDKGTSKTNDSGTP). Residues 1 to 90 (MAPWPELENA…KWSERDSKGK (90 aa)) lie on the Cytoplasmic side of the membrane. A helical transmembrane segment spans residues 91 to 111 (ILCIFQGIGKFILLLGFLYLF). Residues 112 to 136 (VCSLDVLSSAFQLVGGKMAGQFFSN) lie on the Extracellular side of the membrane. Residues 137–157 (NSIMSNPVAGLVIGVLVTVMV) traverse the membrane as a helical segment. Residues 158–213 (QSSSTSSSIIVSMVASSLLSVRAAIPIIMGANIGTSITNTIVALMQAGDRNEFRRA) are Cytoplasmic-facing. Residues 214 to 234 (FAGATVHDFFNWLSVLVLLPL) form a helical membrane-spanning segment. The Extracellular segment spans residues 235–363 (EAATHYLEKL…FVNFSLPDLA (129 aa)). Residues Asn295, Asn313, Asn321, Asn340, and Asn356 are each glycosylated (N-linked (GlcNAc...) asparagine). A disulfide bond links Cys303 and Cys350. Residues 364–384 (VGIILLTVSLLILCGCLIMIV) traverse the membrane as a helical segment. Over 385-408 (KLLGSVLRGQVATVIKKTLNTDFP) the chain is Cytoplasmic. Residues 409 to 429 (FPFAWLTGYLAILVGAGMTFI) form a helical membrane-spanning segment. At 430 to 486 (VQSSSVFTSAMTPLIGIGVISIERAYPLTLGSNIGTTTTAILAALASPGNTLRSSLQ) the chain is on the extracellular side. The chain crosses the membrane as a helical span at residues 487–507 (IALCHFFFNISGILLWYPIPF). Topologically, residues 508 to 526 (TRLPIRLAKGLGNISAKYR) are cytoplasmic. Residues 527–547 (WFAVFYLIFFFLLTPLTVFGL) form a helical membrane-spanning segment. At 548 to 551 (SLAG) the chain is on the extracellular side. The chain crosses the membrane as a helical span at residues 552–572 (WPVLVGVGVPIILLILLVLCL). The Cytoplasmic segment spans residues 573–695 (RMLQARCPRI…MKALSNTTVF (123 aa)).

The protein belongs to the SLC34A transporter family. As to expression, highly expressed in the lung, in type II alveolar cells. Moderately expressed in kidney followed by small intestine.

The protein resides in the apical cell membrane. It catalyses the reaction 3 Na(+)(out) + phosphate(out) = 3 Na(+)(in) + phosphate(in). In terms of biological role, involved in actively transporting phosphate into cells via Na(+) cotransport. In Rattus norvegicus (Rat), this protein is Sodium-dependent phosphate transport protein 2B (Slc34a2).